The following is a 307-amino-acid chain: UDP-3-O-acyl-N-acetylglucosamine deacetylase (307 aa).

Zn(2+)-binding residues include H78, H237, and D241. H264 (proton donor) is an active-site residue.

It belongs to the LpxC family. The cofactor is Zn(2+).

It carries out the reaction a UDP-3-O-[(3R)-3-hydroxyacyl]-N-acetyl-alpha-D-glucosamine + H2O = a UDP-3-O-[(3R)-3-hydroxyacyl]-alpha-D-glucosamine + acetate. It functions in the pathway glycolipid biosynthesis; lipid IV(A) biosynthesis; lipid IV(A) from (3R)-3-hydroxytetradecanoyl-[acyl-carrier-protein] and UDP-N-acetyl-alpha-D-glucosamine: step 2/6. Functionally, catalyzes the hydrolysis of UDP-3-O-myristoyl-N-acetylglucosamine to form UDP-3-O-myristoylglucosamine and acetate, the committed step in lipid A biosynthesis. This is UDP-3-O-acyl-N-acetylglucosamine deacetylase from Azoarcus sp. (strain BH72).